Here is a 189-residue protein sequence, read N- to C-terminus: MPKPKKGARFGGSASHQKAIFANLATALFEHGRITTTESKAKALRPYAEKLVTHAKAGTLAHRREVLKVIRNKDVVHTLFAEIGPFYADRDGGYTRIIKTVPRKGDNAPMAIIELVKEKTVTSEADRARRVKASQDAPAAAPAEENVVEAVEAEATDAEVENADAVVEAIEDETATAADAPEAEEAKKD.

It belongs to the bacterial ribosomal protein bL17 family. Part of the 50S ribosomal subunit. Contacts protein L32.

This is Large ribosomal subunit protein bL17 from Rhodococcus jostii (strain RHA1).